Consider the following 81-residue polypeptide: Photosystem I iron-sulfur center (81 aa).

4Fe-4S ferredoxin-type domains are found at residues 2 to 31 and 39 to 68; these read SHKI…MIPW and IASA…VRVY. [4Fe-4S] cluster is bound by residues Cys-11, Cys-14, Cys-17, Cys-21, Cys-48, Cys-51, Cys-54, and Cys-58.

The eukaryotic PSI reaction center is composed of at least 11 subunits. [4Fe-4S] cluster serves as cofactor.

Its subcellular location is the plastid. It localises to the chloroplast thylakoid membrane. The catalysed reaction is reduced [plastocyanin] + hnu + oxidized [2Fe-2S]-[ferredoxin] = oxidized [plastocyanin] + reduced [2Fe-2S]-[ferredoxin]. Its function is as follows. Apoprotein for the two 4Fe-4S centers FA and FB of photosystem I (PSI); essential for photochemical activity. FB is the terminal electron acceptor of PSI, donating electrons to ferredoxin. The C-terminus interacts with PsaA/B/D and helps assemble the protein into the PSI complex. Required for binding of PsaD and PsaE to PSI. PSI is a plastocyanin-ferredoxin oxidoreductase, converting photonic excitation into a charge separation, which transfers an electron from the donor P700 chlorophyll pair to the spectroscopically characterized acceptors A0, A1, FX, FA and FB in turn. This Chara vulgaris (Common stonewort) protein is Photosystem I iron-sulfur center.